The sequence spans 404 residues: uncharacterized protein (404 aa).

Positions 1 to 21 (MRKLGLALSIMGLLLVSIVAG) are cleaved as a signal peptide. Cys-22 carries the post-translational modification N-acetylcysteine. Residue Cys-22 is the site of S-archaeol cysteine attachment.

Belongs to the BMP lipoprotein family.

It is found in the cell membrane. This is an uncharacterized protein from Pyrococcus abyssi (strain GE5 / Orsay).